Here is a 1548-residue protein sequence, read N- to C-terminus: Dual oxidase 2 (1548 aa).

A signal peptide spans 1–25 (MLRARPEALMLLGALLTGSLGPSGN). Topologically, residues 26 to 601 (QDALSLPWEV…EGSSPGFAIT (576 aa)) are extracellular. The tract at residues 30–596 (SLPWEVQRYD…VLDFFEGSSP (567 aa)) is peroxidase-like; mediates peroxidase activity. 5 N-linked (GlcNAc...) asparagine glycosylation sites follow: N100, N348, N382, N455, and N537. C124 and C1162 are joined by a disulfide. The helical transmembrane segment at 602-622 (IIALCCLPLVSLLLSGVVAYF) threads the bilayer. Topologically, residues 623–1041 (RGREHKKLQK…KRFVENYRRH (419 aa)) are cytoplasmic. 3 EF-hand domains span residues 819-854 (PQDMFVESMFSLADKDGNGYLSFREFLDILVVFMKG), 855-890 (SPEDKSRLMFTMYDLDENGFLSKDEFFTMMRSFIEI), and 899-934 (QLAEVVESMFRESGFQDKEELTWEDFHFMLRDHDSE). 9 residues coordinate Ca(2+): D832, D834, N836, Y838, E843, D868, D870, N872, and E879. The segment at 960-1245 (ISCRVSFITR…GSYALIQLPT (286 aa)) is interaction with TXNDC11. Residues 971–991 (PGERSHPQGLGPPAPEAPELG) form a disordered region. The chain crosses the membrane as a helical span at residues 1042–1062 (IVCVAIFSAICVGVFADRAYY). Residues 1063–1076 (YGFASPPSDIAQTT) are Extracellular-facing. A helical membrane pass occupies residues 1077–1097 (LVGIILSRGTAASVSFMFSYI). The region spanning 1084 to 1266 (RGTAASVSFM…YGGDKLVSLS (183 aa)) is the Ferric oxidoreductase domain. At 1098–1128 (LLTMCRNLITFLRETFLNRYVPFDAAVDFHR) the chain is on the cytoplasmic side. The chain crosses the membrane as a helical span at residues 1129–1151 (WIAMAAVVLAILHSAGHAVNVYI). The Extracellular portion of the chain corresponds to 1152–1185 (FSVSPLSLLACIFPNVFVNDGSKLPQKFYWWFFQ). The helical transmembrane segment at 1186 to 1206 (TVPGMTGVLLLLVLAIMYVFA) threads the bilayer. Residues 1207–1223 (SHHFRRRSFRGFWLTHH) are Cytoplasmic-facing. Helical transmembrane passes span 1224 to 1244 (LYILLYALLIIHGSYALIQLP) and 1245 to 1265 (TFHIYFLVPAIIYGGDKLVSL). The Cytoplasmic segment spans residues 1266-1548 (SRKKVEISVV…AHFMHHYENF (283 aa)). The FAD-binding FR-type domain occupies 1267–1373 (RKKVEISVVK…DGPFGEGHQE (107 aa)).

This sequence in the N-terminal section; belongs to the peroxidase family. As to quaternary structure, heterodimer with DUOXA2; disulfide-linked. Interacts with TXNDC11, TPO and CYBA. In terms of processing, N-glycosylated. As to expression, expressed in colon, small intestine, duodenum and tracheal surface epithelial cells (at protein level). Expressed in thyrocytes. Also detected in kidney, liver, lung, pancreas, prostate, salivary glands, rectum and testis.

The protein localises to the apical cell membrane. It is found in the cell junction. The catalysed reaction is NADH + O2 + H(+) = H2O2 + NAD(+). It carries out the reaction NADPH + O2 + H(+) = H2O2 + NADP(+). It functions in the pathway hormone biosynthesis; thyroid hormone biosynthesis. With respect to regulation, peroxidase activity is inhibited by aminobenzohydrazide. The NADPH oxidase activity is calcium-dependent. Functionally, generates hydrogen peroxide which is required for the activity of thyroid peroxidase/TPO and lactoperoxidase/LPO. Plays a role in thyroid hormones synthesis and lactoperoxidase-mediated antimicrobial defense at the surface of mucosa. May have its own peroxidase activity through its N-terminal peroxidase-like domain. The chain is Dual oxidase 2 (DUOX2) from Homo sapiens (Human).